Here is a 326-residue protein sequence, read N- to C-terminus: Aspartate carbamoyltransferase catalytic subunit (326 aa).

The carbamoyl phosphate site is built by Arg-76 and Thr-77. Residue Lys-104 coordinates L-aspartate. The carbamoyl phosphate site is built by Arg-126, His-156, and Gln-159. L-aspartate contacts are provided by Arg-189 and Arg-244. Carbamoyl phosphate is bound by residues Gly-285 and Pro-286.

This sequence belongs to the aspartate/ornithine carbamoyltransferase superfamily. ATCase family. In terms of assembly, heterododecamer (2C3:3R2) of six catalytic PyrB chains organized as two trimers (C3), and six regulatory PyrI chains organized as three dimers (R2).

It carries out the reaction carbamoyl phosphate + L-aspartate = N-carbamoyl-L-aspartate + phosphate + H(+). It functions in the pathway pyrimidine metabolism; UMP biosynthesis via de novo pathway; (S)-dihydroorotate from bicarbonate: step 2/3. Its function is as follows. Catalyzes the condensation of carbamoyl phosphate and aspartate to form carbamoyl aspartate and inorganic phosphate, the committed step in the de novo pyrimidine nucleotide biosynthesis pathway. The protein is Aspartate carbamoyltransferase catalytic subunit of Polynucleobacter asymbioticus (strain DSM 18221 / CIP 109841 / QLW-P1DMWA-1) (Polynucleobacter necessarius subsp. asymbioticus).